The chain runs to 151 residues: MALYEHVLLARQDISQQQVDALVEQYKGVLEANGGKVGKVESWGLRPLTYRIKKNRKAYYTLVNIDAPAAAVAEMERQMRINEDVLRFLTVRVEEHEEGQSAMLTRRDDRRERDGDDRPRRREGGFDRGDRGDRGDRGPRRPRDNEAGEGA.

The tract at residues 96–151 (HEEGQSAMLTRRDDRRERDGDDRPRRREGGFDRGDRGDRGDRGPRRPRDNEAGEGA) is disordered.

It belongs to the bacterial ribosomal protein bS6 family.

Binds together with bS18 to 16S ribosomal RNA. In Brucella anthropi (strain ATCC 49188 / DSM 6882 / CCUG 24695 / JCM 21032 / LMG 3331 / NBRC 15819 / NCTC 12168 / Alc 37) (Ochrobactrum anthropi), this protein is Small ribosomal subunit protein bS6.